The sequence spans 161 residues: Dermonecrotic toxin LarSicTox-alphaI-1 (161 aa).

Belongs to the arthropod phospholipase D family. Class II subfamily. It depends on Mg(2+) as a cofactor. Post-translationally, contains 2 disulfide bonds. As to expression, expressed by the venom gland.

Its subcellular location is the secreted. The catalysed reaction is an N-(acyl)-sphingosylphosphocholine = an N-(acyl)-sphingosyl-1,3-cyclic phosphate + choline. It carries out the reaction an N-(acyl)-sphingosylphosphoethanolamine = an N-(acyl)-sphingosyl-1,3-cyclic phosphate + ethanolamine. The enzyme catalyses a 1-acyl-sn-glycero-3-phosphocholine = a 1-acyl-sn-glycero-2,3-cyclic phosphate + choline. It catalyses the reaction a 1-acyl-sn-glycero-3-phosphoethanolamine = a 1-acyl-sn-glycero-2,3-cyclic phosphate + ethanolamine. In terms of biological role, dermonecrotic toxins cleave the phosphodiester linkage between the phosphate and headgroup of certain phospholipids (sphingolipid and lysolipid substrates), forming an alcohol (often choline) and a cyclic phosphate. This toxin acts on sphingomyelin (SM). It may also act on ceramide phosphoethanolamine (CPE), lysophosphatidylcholine (LPC) and lysophosphatidylethanolamine (LPE), but not on lysophosphatidylserine (LPS), and lysophosphatidylglycerol (LPG). It acts by transphosphatidylation, releasing exclusively cyclic phosphate products as second products. Induces dermonecrosis, hemolysis, increased vascular permeability, edema, inflammatory response, and platelet aggregation. The polypeptide is Dermonecrotic toxin LarSicTox-alphaI-1 (Loxosceles arizonica (Arizona brown spider)).